A 348-amino-acid polypeptide reads, in one-letter code: Phosphoribosylformylglycinamidine cyclo-ligase (348 aa).

The protein belongs to the AIR synthase family.

It localises to the cytoplasm. The catalysed reaction is 2-formamido-N(1)-(5-O-phospho-beta-D-ribosyl)acetamidine + ATP = 5-amino-1-(5-phospho-beta-D-ribosyl)imidazole + ADP + phosphate + H(+). It functions in the pathway purine metabolism; IMP biosynthesis via de novo pathway; 5-amino-1-(5-phospho-D-ribosyl)imidazole from N(2)-formyl-N(1)-(5-phospho-D-ribosyl)glycinamide: step 2/2. In Ruegeria pomeroyi (strain ATCC 700808 / DSM 15171 / DSS-3) (Silicibacter pomeroyi), this protein is Phosphoribosylformylglycinamidine cyclo-ligase.